The primary structure comprises 264 residues: Thymidylate synthase (264 aa).

Arginine 21 contacts dUMP. Histidine 51 contacts (6R)-5,10-methylene-5,6,7,8-tetrahydrofolate. Arginine 126–arginine 127 contributes to the dUMP binding site. The active-site Nucleophile is cysteine 146. Residues arginine 166–aspartate 169, asparagine 177, and histidine 207–tyrosine 209 each bind dUMP. Aspartate 169 provides a ligand contact to (6R)-5,10-methylene-5,6,7,8-tetrahydrofolate. Serine 263 serves as a coordination point for (6R)-5,10-methylene-5,6,7,8-tetrahydrofolate.

This sequence belongs to the thymidylate synthase family. Bacterial-type ThyA subfamily. Homodimer.

It localises to the cytoplasm. It catalyses the reaction dUMP + (6R)-5,10-methylene-5,6,7,8-tetrahydrofolate = 7,8-dihydrofolate + dTMP. It functions in the pathway pyrimidine metabolism; dTTP biosynthesis. Functionally, catalyzes the reductive methylation of 2'-deoxyuridine-5'-monophosphate (dUMP) to 2'-deoxythymidine-5'-monophosphate (dTMP) while utilizing 5,10-methylenetetrahydrofolate (mTHF) as the methyl donor and reductant in the reaction, yielding dihydrofolate (DHF) as a by-product. This enzymatic reaction provides an intracellular de novo source of dTMP, an essential precursor for DNA biosynthesis. The sequence is that of Thymidylate synthase from Wigglesworthia glossinidia brevipalpis.